Reading from the N-terminus, the 352-residue chain is Protein RecA (352 aa).

67–74 (GPESSGKT) is an ATP binding site.

It belongs to the RecA family.

It is found in the cytoplasm. Functionally, can catalyze the hydrolysis of ATP in the presence of single-stranded DNA, the ATP-dependent uptake of single-stranded DNA by duplex DNA, and the ATP-dependent hybridization of homologous single-stranded DNAs. It interacts with LexA causing its activation and leading to its autocatalytic cleavage. The protein is Protein RecA of Enterobacter sp. (strain 638).